The following is a 95-amino-acid chain: Protein TusB (95 aa).

The protein belongs to the DsrH/TusB family. Heterohexamer, formed by a dimer of trimers. The hexameric TusBCD complex contains 2 copies each of TusB, TusC and TusD. The TusBCD complex interacts with TusE.

The protein localises to the cytoplasm. Part of a sulfur-relay system required for 2-thiolation of 5-methylaminomethyl-2-thiouridine (mnm(5)s(2)U) at tRNA wobble positions. The polypeptide is Protein TusB (Klebsiella pneumoniae subsp. pneumoniae (strain ATCC 700721 / MGH 78578)).